We begin with the raw amino-acid sequence, 324 residues long: Olfactory receptor 11H4 (324 aa).

At 1 to 35 (MSFFFVDLRPMNRSATHIVTEFILLGFPGCWKIQI) the chain is on the extracellular side. The N-linked (GlcNAc...) asparagine glycan is linked to Asn-12. The helical transmembrane segment at 36–56 (FLFSLFLVIYVLTLLGNGAII) threads the bilayer. The Cytoplasmic portion of the chain corresponds to 57–64 (YAVRCNPL). A helical transmembrane segment spans residues 65 to 85 (LHTPMYFLLGNFAFLEIWYVS). Topologically, residues 86-109 (STIPNMLVNILSKTKAISFSGCFL) are extracellular. Residues Cys-107 and Cys-199 are joined by a disulfide bond. The chain crosses the membrane as a helical span at residues 110-130 (QFYFFFSLGTTECLFLAVMAY). Over 131-149 (DRYLAICHPLQYPAIMTVR) the chain is Cytoplasmic. Residues 150–170 (FCGKLVSFCWLIGFLGYPIPI) traverse the membrane as a helical segment. The Extracellular portion of the chain corresponds to 171–207 (FYISQLPFCGPNIIDHFLCDMDPLMALSCAPAPITEC). A helical membrane pass occupies residues 208–227 (IFYTQSSLVLFFTSMYILRS). Topologically, residues 228 to 247 (YILLLTAVFQVPSAAGRRKA) are cytoplasmic. A helical membrane pass occupies residues 248–268 (FSTCGSHLVVVSLFYGTVMVM). At 269 to 281 (YVSPTYGIPTLLQ) the chain is on the extracellular side. A helical transmembrane segment spans residues 282–302 (KILTLVYSVTTPLFNPLIYTL). Topologically, residues 303–324 (RNKDMKLALRNVLFGMRIRQNS) are cytoplasmic.

This sequence belongs to the G-protein coupled receptor 1 family.

The protein resides in the cell membrane. Functionally, odorant receptor. This chain is Olfactory receptor 11H4 (OR11H4), found in Homo sapiens (Human).